The primary structure comprises 105 residues: Fe-S protein maturation auxiliary factor PG_1777 (105 aa).

It belongs to the Fe-S cluster assembly domain superfamily. MIP18-like family. As to quaternary structure, putative homodimer; may be disulfide-linked.

Its function is as follows. Iron binding protein that protects DNA from Fenton chemistry-mediated damage caused by hydrogen peroxide induced oxidative stress. May be involved in iron-sulfur cluster assembly. The polypeptide is Fe-S protein maturation auxiliary factor PG_1777 (Porphyromonas gingivalis (strain ATCC BAA-308 / W83)).